The chain runs to 354 residues: Histone-lysine N-methyltransferase SUVR3 (354 aa).

The Pre-SET domain occupies 143–188; that stretch reads SGCECERCEEGYCKCLAFAGMEEIANECGSGCGCGSDCSNRVTQKG. The Zn(2+) site is built by C145, C147, C150, C155, C157, C170, C174, C176, and C180. The SET domain maps to 191–323; it reads VSLKIVRDEK…AEEELSFSYG (133 aa). Residues 201-203 and 281-282 contribute to the S-adenosyl-L-methionine site; these read KGW and NH. C284 contacts Zn(2+). Y322 provides a ligand contact to S-adenosyl-L-methionine. A Post-SET domain is found at 334-350; sequence DKLNCSCGSSCCLGTLP. Zn(2+) is bound by residues C338, C340, and C345.

Belongs to the class V-like SAM-binding methyltransferase superfamily.

It is found in the nucleus. It localises to the chromosome. The catalysed reaction is L-lysyl-[histone] + S-adenosyl-L-methionine = N(6)-methyl-L-lysyl-[histone] + S-adenosyl-L-homocysteine + H(+). In terms of biological role, histone methyltransferase. In Arabidopsis thaliana (Mouse-ear cress), this protein is Histone-lysine N-methyltransferase SUVR3 (SUVR3).